A 657-amino-acid chain; its full sequence is Tyrosine-protein phosphatase vhp-1 (657 aa).

The 131-residue stretch at 21–151 folds into the Rhodanese domain; that stretch reads APDTTLVVDC…FAQQYPQLCE (131 aa). The region spanning 175-318 is the Tyrosine-protein phosphatase domain; sequence GITLITPNIY…LLEYENVLIK (144 aa). Cys-262 serves as the catalytic Phosphocysteine intermediate. 3 disordered regions span residues 353–426, 539–563, and 581–657; these read SNCV…MDLG, VPAG…SSSA, and PAST…PCHQ. Low complexity predominate over residues 366 to 405; that stretch reads SPSSPSVSEGSAASEPETSSSAASSSSTASAPPSMPSTSE. The span at 406 to 419 shows a compositional bias: polar residues; that stretch reads QGTSSGTVNVNGKR. Composition is skewed to low complexity over residues 542–563 and 581–597; these read GSSS…SSSA and PAST…TSRA.

This sequence belongs to the protein-tyrosine phosphatase family. Non-receptor class dual specificity subfamily. As to quaternary structure, may interact with pmk-3. As to expression, expressed in the pharynx, intestine, neurons and vulval hypodermal cells.

It catalyses the reaction O-phospho-L-tyrosyl-[protein] + H2O = L-tyrosyl-[protein] + phosphate. Acts preferentially on the c-Jun N-terminal kinase (JNK) and p38 MAPKs. Plays an important role in the heavy metal stress response and in axon regeneration by negatively regulating the kgb-1 (JNK-like) and the pmk-1 (p38-type) MAPK signaling pathways. This chain is Tyrosine-protein phosphatase vhp-1 (vhp-1), found in Caenorhabditis elegans.